Here is a 444-residue protein sequence, read N- to C-terminus: Phosphoglucosamine mutase (444 aa).

Ser100 serves as the catalytic Phosphoserine intermediate. 4 residues coordinate Mg(2+): Ser100, Asp240, Asp242, and Asp244. Ser100 is subject to Phosphoserine.

Belongs to the phosphohexose mutase family. Requires Mg(2+) as cofactor. Activated by phosphorylation.

The enzyme catalyses alpha-D-glucosamine 1-phosphate = D-glucosamine 6-phosphate. Catalyzes the conversion of glucosamine-6-phosphate to glucosamine-1-phosphate. The chain is Phosphoglucosamine mutase from Moorella thermoacetica (strain ATCC 39073 / JCM 9320).